A 57-amino-acid chain; its full sequence is uncharacterized protein (57 aa).

This is an uncharacterized protein from Ureaplasma parvum serovar 3 (strain ATCC 700970).